The primary structure comprises 517 residues: GMP synthase [glutamine-hydrolyzing] (517 aa).

The Glutamine amidotransferase type-1 domain maps to 9-199 (RILILDFGSQ…VLGICGCERL (191 aa)). The Nucleophile role is filled by Cys-86. Active-site residues include His-173 and Glu-175. Residues 200–392 (WTSESIIEDA…LGLPYEMLYR (193 aa)) form the GMPS ATP-PPase domain. ATP is bound at residue 227–233 (SGGVDSS).

As to quaternary structure, homodimer.

It carries out the reaction XMP + L-glutamine + ATP + H2O = GMP + L-glutamate + AMP + diphosphate + 2 H(+). Its pathway is purine metabolism; GMP biosynthesis; GMP from XMP (L-Gln route): step 1/1. Functionally, catalyzes the synthesis of GMP from XMP. The polypeptide is GMP synthase [glutamine-hydrolyzing] (Vibrio vulnificus (strain CMCP6)).